A 259-amino-acid chain; its full sequence is DNA repair protein RecO (259 aa).

The protein belongs to the RecO family.

Functionally, involved in DNA repair and RecF pathway recombination. This Leuconostoc mesenteroides subsp. mesenteroides (strain ATCC 8293 / DSM 20343 / BCRC 11652 / CCM 1803 / JCM 6124 / NCDO 523 / NBRC 100496 / NCIMB 8023 / NCTC 12954 / NRRL B-1118 / 37Y) protein is DNA repair protein RecO.